The primary structure comprises 134 residues: Retinol-binding protein 2 (134 aa).

Residues Lys-41 and Gln-109 each contribute to the all-trans-retinol site.

It belongs to the calycin superfamily. Fatty-acid binding protein (FABP) family. Expressed in prenatal liver, intestine and lung, and in adult intestine.

Its subcellular location is the cytoplasm. In terms of biological role, intracellular transport of retinol. The chain is Retinol-binding protein 2 (Rbp2) from Mus musculus (Mouse).